A 280-amino-acid chain; its full sequence is Borealin (280 aa).

The segment at 1 to 58 is required for interaction with INCENP; sequence MAPRKGSSRVAKTNSLRRRKLASFLKDFDREVEIRIKQIESDRQNLLKEVDNLYNIEI. Residues 1 to 88 are required for centromere localization; that stretch reads MAPRKGSSRV…NKQALEEAAT (88 aa). The interval 1 to 140 is required for interaction with SENP3; sequence MAPRKGSSRV…ENERKNLQTA (140 aa). The tract at residues 10-109 is required to form a minimal CPC core complex that localizes to the central spindle and midbody and properly executes the role of the CPC during cytokinesis; it reads VAKTNSLRRR…TAEAIQTPLK (100 aa). Residues 20–78 are required for interaction with INCENP and BIRC5; that stretch reads KLASFLKDFDREVEIRIKQIESDRQNLLKEVDNLYNIEILRLPKALREMNWLDYFALGG. A phosphothreonine; by TTK mark is found at Thr88 and Thr94. Residue Thr106 is modified to Phosphothreonine. At Ser110 the chain carries Phosphoserine. The disordered stretch occupies residues 130–169; it reads EENERKNLQTARVKRCPPSKKRTQSIQGKGKGKRSSRANT. Lys135 participates in a covalent cross-link: Glycyl lysine isopeptide (Lys-Gly) (interchain with G-Cter in SUMO2). Positions 141-152 are enriched in basic residues; sequence RVKRCPPSKKRT. Ser165 bears the Phosphoserine; by AURKB mark. Thr169 carries the phosphothreonine; by TTK modification. 2 positions are modified to phosphothreonine: Thr189 and Thr204. Ser219 and Ser224 each carry phosphoserine. Thr230 bears the Phosphothreonine; by TTK mark. Residues Ser238 and Ser244 each carry the phosphoserine modification.

The protein belongs to the borealin family. In terms of assembly, may form homooligomers and homodimers. Component of the chromosomal passenger complex (CPC) composed of at least BIRC5/survivin, CDCA8/borealin, INCENP, AURKB or AURKC; in the complex forms a triple-helix bundle-based subcomplex with INCENP and BIRC5. Interacts with SENP3, UBE2I and RANBP2. Interacts (phosphorylated) with SGO1 and SGO2; the association is dependent on CDK1. Post-translationally, phosphorylated by TTK, essentially at Thr-88, Thr94, Thr-169 and Thr-230. Phosphorylation (probably by CDK1) promotes targeting of the CPC to centromeric DNA. Sumoylated by UBE2I and RANBP2. Desumoylated by SENP3 through the removal of SUMO2 and SUMO3.

It is found in the nucleus. Its subcellular location is the nucleolus. The protein resides in the cytoplasm. The protein localises to the chromosome. It localises to the centromere. It is found in the cytoskeleton. Its subcellular location is the spindle. Its function is as follows. Component of the chromosomal passenger complex (CPC), a complex that acts as a key regulator of mitosis. The CPC complex has essential functions at the centromere in ensuring correct chromosome alignment and segregation and is required for chromatin-induced microtubule stabilization and spindle assembly. In the complex, it may be required to direct the CPC to centromeric DNA. In Pongo abelii (Sumatran orangutan), this protein is Borealin (CDCA8).